We begin with the raw amino-acid sequence, 398 residues long: Serpin-Z2B (398 aa).

Residues 343-367 form an RCL region; sequence GTEAAATTIAKVVLRQAPPPSVLDF.

It belongs to the serpin family.

Functionally, inhibits chymotrypsin, cathepsin G and trypsin in vitro. The protein is Serpin-Z2B of Triticum aestivum (Wheat).